Consider the following 339-residue polypeptide: DNA-directed RNA polymerase subunit alpha (339 aa).

The alpha N-terminal domain (alpha-NTD) stretch occupies residues 1-233 (MVREEVAGST…DLFLPFLHAE (233 aa)). The interval 264 to 339 (KKGIPLNCIF…IDLLKNKLSF (76 aa)) is alpha C-terminal domain (alpha-CTD).

This sequence belongs to the RNA polymerase alpha chain family. As to quaternary structure, in plastids the minimal PEP RNA polymerase catalytic core is composed of four subunits: alpha, beta, beta', and beta''. When a (nuclear-encoded) sigma factor is associated with the core the holoenzyme is formed, which can initiate transcription.

The protein localises to the plastid. It localises to the chloroplast. The catalysed reaction is RNA(n) + a ribonucleoside 5'-triphosphate = RNA(n+1) + diphosphate. Functionally, DNA-dependent RNA polymerase catalyzes the transcription of DNA into RNA using the four ribonucleoside triphosphates as substrates. The sequence is that of DNA-directed RNA polymerase subunit alpha from Crithopsis delileana.